We begin with the raw amino-acid sequence, 602 residues long: Exo-poly-alpha-D-galacturonosidase (602 aa).

The signal sequence occupies residues 1–27 (MKVITFSRRSALASIVATCLMSTPALA). One can recognise a Fibronectin type-III domain in the interval 32-149 (APQKLQIPTL…TVTTTTTAVP (118 aa)). The Proton donor role is filled by aspartate 395. Histidine 428 is a catalytic residue.

It belongs to the glycosyl hydrolase 28 family.

It is found in the secreted. The catalysed reaction is [(1-&gt;4)-alpha-D-galacturonosyl](n) + H2O = alpha-D-galacturonosyl-(1-&gt;4)-D-galacturonate + [(1-&gt;4)-alpha-D-galacturonosyl](n-2). Contributes significantly to bacterial utilization of polygalacturonate and the induction of pectate lyase in the presence of extracellular pectic polymers. In Dickeya chrysanthemi (Pectobacterium chrysanthemi), this protein is Exo-poly-alpha-D-galacturonosidase (pehX).